The sequence spans 289 residues: Pyridoxal kinase PdxY (289 aa).

Substrate is bound by residues S9 and 44-45 (TQ). The ATP site is built by D112, V144, E149, and K182. Substrate is bound at residue D221.

The protein belongs to the pyridoxine kinase family. PdxY subfamily. As to quaternary structure, homodimer. Mg(2+) is required as a cofactor.

It catalyses the reaction pyridoxal + ATP = pyridoxal 5'-phosphate + ADP + H(+). It participates in cofactor metabolism; pyridoxal 5'-phosphate salvage; pyridoxal 5'-phosphate from pyridoxal: step 1/1. Functionally, pyridoxal kinase involved in the salvage pathway of pyridoxal 5'-phosphate (PLP). Catalyzes the phosphorylation of pyridoxal to PLP. This Vibrio campbellii (strain ATCC BAA-1116) protein is Pyridoxal kinase PdxY.